The following is a 440-amino-acid chain: Tyrosine--tRNA ligase (440 aa).

Tyr46 provides a ligand contact to L-tyrosine. The 'HIGH' region motif lies at 51 to 60 (PTAPSLHIGN). L-tyrosine is bound by residues Tyr181 and Gln185. Positions 241 to 245 (KFGKS) match the 'KMSKS' region motif. Lys244 is an ATP binding site. Positions 373–430 (DRIAQAGVSAGLFKSISEARKTIKSGGVYVNNVRVEDEEQLLGDGDFLKGRFVVLRRG) constitute an S4 RNA-binding domain.

It belongs to the class-I aminoacyl-tRNA synthetase family. TyrS type 1 subfamily. As to quaternary structure, homodimer.

It is found in the cytoplasm. The catalysed reaction is tRNA(Tyr) + L-tyrosine + ATP = L-tyrosyl-tRNA(Tyr) + AMP + diphosphate + H(+). Functionally, catalyzes the attachment of tyrosine to tRNA(Tyr) in a two-step reaction: tyrosine is first activated by ATP to form Tyr-AMP and then transferred to the acceptor end of tRNA(Tyr). In Bifidobacterium animalis subsp. lactis (strain AD011), this protein is Tyrosine--tRNA ligase.